We begin with the raw amino-acid sequence, 108 residues long: uncharacterized protein (108 aa).

Residues 74-108 (TGSKKRDSKANSRSRPSGTITSRGARIGLQGYKSH) form a disordered region. Polar residues predominate over residues 84–95 (NSRSRPSGTITS).

This is an uncharacterized protein from Saccharomyces cerevisiae (strain ATCC 204508 / S288c) (Baker's yeast).